Consider the following 674-residue polypeptide: MWHEARKHERKLRGMMVDYKKRAERRREYYEKIKKDPAQFLQVHGRACKVHLDSAVALAAESPVNMMPWQGDTNNMIDRFDVRAHLDHIPDYTPPLLTTISPEQESDERKCNYERYRGLVQNDFAGISEEQCLYQIYIDELYGGLQRPSEDEKKKLAEKKASIGYTYEDSTVAEVEKAAEKPEEEESAAEEESNSDEDEVIPDIDVEVDVDELNQEQVADLNKQATTYGMADGDFVRMLRKDKEEAEAIKHAKALEEEKAMYSGRRSRRQRREFREKRLRGRKISPPSYARRDSPTYDPYKRSPSESSSESRSRSRSPTPGREEKITFITSFGGSDEEAAAAAAAAAASGVTTGKPPAPPQPGGPAPGRNASARRRSSSSSSSSSASRTSSSRSSSRSSSRSRRGGGYYRSGRHARSRSRSWSRSRSRSRRYSRSRSRGRRHSGGGSRDGHRYSRSPARRGGYGPRRRSRSRSHSGDRYRRGGRGLRHHSSSRSRSSWSLSPSRSRSLTRSRSHSPSPSQSRSRSRSRSQSPSPSPAREKLTRPAASPAVGEKLKKTEPAAGKETGAAKPKLTPQEKLKLRMQKALNRQFKADKKAAQEKMIQQEHERQEREDELRAMARKIRMKERERREKEREEWERQYSRQSRSPSPRYSREYSSSRRRSRSRSRSPHYRH.

A Phosphoserine modification is found at Ser101. Disordered regions lie at residues 171–232 and 258–674; these read TVAE…GMAD and EKAM…HYRH. The segment covering 182 to 214 has biased composition (acidic residues); sequence PEEEESAAEEESNSDEDEVIPDIDVEVDVDELN. Positions 265 to 283 are enriched in basic residues; sequence RRSRRQRREFREKRLRGRK. 2 positions are modified to phosphoserine: Ser285 and Ser294. The segment covering 290–313 has biased composition (basic and acidic residues); that stretch reads ARRDSPTYDPYKRSPSESSSESRS. Thr327 carries the phosphothreonine modification. Residues Ser331 and Ser335 each carry the phosphoserine modification. Over residues 356–365 the composition is skewed to pro residues; it reads PPAPPQPGGP. A compositionally biased stretch (low complexity) spans 378–399; that stretch reads SSSSSSSSASRTSSSRSSSRSS. 2 stretches are compositionally biased toward basic residues: residues 411-443 and 481-492; these read SGRHARSRSRSWSRSRSRSRRYSRSRSRGRRHS and RGGRGLRHHSSS. 2 stretches are compositionally biased toward low complexity: residues 493–506 and 514–532; these read RSRSSWSLSPSRSR and HSPSPSQSRSRSRSRSQSP. Ser547 carries the phosphoserine modification. The residue at position 573 (Thr573) is a Phosphothreonine. Residues 585 to 647 are a coiled coil; that stretch reads ALNRQFKADK…ERQYSRQSRS (63 aa). 2 stretches are compositionally biased toward basic and acidic residues: residues 590–617 and 625–641; these read FKADKKAAQEKMIQQEHERQEREDELRA and KERERREKEREEWERQY. Positions 642–651 are enriched in low complexity; the sequence is SRQSRSPSPR. Residues 659-674 are compositionally biased toward basic residues; sequence SRRRSRSRSRSPHYRH.

This sequence belongs to the splicing factor SR family. As to quaternary structure, probably interacts with CLK4. Phosphorylated in vitro by CLK4.

The protein resides in the nucleus. Functionally, probably functions as an alternative splicing regulator. May regulate the mRNA splicing of genes such as CLK1. May act by regulating members of the CLK kinase family. The protein is CLK4-associating serine/arginine rich protein (CLASRP) of Homo sapiens (Human).